The following is a 381-amino-acid chain: Succinyl-diaminopimelate desuccinylase (381 aa).

H68 is a binding site for Zn(2+). D70 is a catalytic residue. Zn(2+) is bound at residue D101. E135 functions as the Proton acceptor in the catalytic mechanism. Positions 136, 164, and 350 each coordinate Zn(2+).

Belongs to the peptidase M20A family. DapE subfamily. In terms of assembly, homodimer. It depends on Zn(2+) as a cofactor. Requires Co(2+) as cofactor.

It catalyses the reaction N-succinyl-(2S,6S)-2,6-diaminopimelate + H2O = (2S,6S)-2,6-diaminopimelate + succinate. It functions in the pathway amino-acid biosynthesis; L-lysine biosynthesis via DAP pathway; LL-2,6-diaminopimelate from (S)-tetrahydrodipicolinate (succinylase route): step 3/3. In terms of biological role, catalyzes the hydrolysis of N-succinyl-L,L-diaminopimelic acid (SDAP), forming succinate and LL-2,6-diaminopimelate (DAP), an intermediate involved in the bacterial biosynthesis of lysine and meso-diaminopimelic acid, an essential component of bacterial cell walls. The polypeptide is Succinyl-diaminopimelate desuccinylase (Neisseria meningitidis serogroup A / serotype 4A (strain DSM 15465 / Z2491)).